The primary structure comprises 360 residues: G-protein coupled receptor 15 (360 aa).

At 1–33 (MDPEETSVYLDYYYATSPNSDIRETHSHVPYTS) the chain is on the extracellular side. Residues 34 to 54 (VFLPVFYTAVFLTGVLGNLVL) traverse the membrane as a helical segment. Residues 55 to 69 (MGALHFKPGSRRLID) are Cytoplasmic-facing. A helical membrane pass occupies residues 70–90 (IFIINLAASDFIFLVTLPLWV). Residues 91–120 (DKEASLGLWRTGSFLCKGSSYMISVNMHCS) lie on the Extracellular side of the membrane. Residues 121-141 (VLLLTCMSVDRYLAIVWPVVS) traverse the membrane as a helical segment. The Cytoplasmic portion of the chain corresponds to 142–149 (RKFRRTDC). Residues 150–170 (AYVVCASIWFISCLLGLPTLL) form a helical membrane-spanning segment. Topologically, residues 171–192 (SRELTLIDDKPYCAEKKATPIK) are extracellular. The chain crosses the membrane as a helical span at residues 193 to 213 (LIWSLVALIFTFFVPLLSIVT). Residues 214-239 (CYCCIARKLCAHYQQSGKHNKKLKKS) lie on the Cytoplasmic side of the membrane. Residues 240–260 (IKIIFIVVAAFLVSWLPFNTF) traverse the membrane as a helical segment. Residues 261–284 (KFLAIVSGLRQEHYLPSAILQLGM) are Extracellular-facing. The helical transmembrane segment at 285-305 (EVSGPLAFANSCVNPFIYYIF) threads the bilayer. Residues 306–360 (DSYIRRAIVHCLCPCLKNYDFGSSTETSDSHLTKALSTFIHAEDFARRRKRSVSL) are Cytoplasmic-facing. Residue S359 is modified to Phosphoserine.

It belongs to the G-protein coupled receptor 1 family. In terms of assembly, interacts with adapter YWHAE; this interaction promotes ER-to-Golgi transport of GPR15. Interacts with GNAI1; this interaction initiates the signaling pathway. In terms of processing, phosphorylation is necessary for YWHAE binding and efficient surface expression. Post-translationally, O-glycosylated. Sialylated O-glycans in the N-terminal tail inhibits binding of GPR15LG. Sulfation is required for efficient binding of GPR15LG. In terms of tissue distribution, highly expressed in lymphoid tissues, including macrophages and peripheral blood mononuclear cells.

Its subcellular location is the cell membrane. In terms of biological role, g protein-coupled receptor that plays an important role in immune homeostasis. Acts via its natural ligand GPR15LG, a chemokine-like polypeptide strongly expressed in gastrointestinal tissues. GPR15-GPR15LG signaling axis regulates intestinal homeostasis and inflammation through the migration of immune cells. Controls thereby the specific homing of T-cells, particularly FOXP3+ regulatory T-cells (Tregs), to the large intestine lamina propria. Also required for skin localization of thymus-derived dendritic epidermal T-cells. Plays an important role in mediating cytoprotective function as well as angiogenesis of thrombomodulin. Mechanistically, preferentially signals through the Gi/o pathway to inhibit adenylate cyclase activity and activate a phosphatidylinositol-calcium second messenger system that regulates the release of Ca(2+) ions from intracellular stores. (Microbial infection) Acts as an alternative coreceptor with CD4 for HIV-1 infection. This chain is G-protein coupled receptor 15 (GPR15), found in Homo sapiens (Human).